Consider the following 559-residue polypeptide: Glycerol kinase (559 aa).

An ADP-binding site is contributed by threonine 20. ATP is bound by residues threonine 20, serine 21, and serine 22. Threonine 20 is a sn-glycerol 3-phosphate binding site. An ADP-binding site is contributed by arginine 24. 3 residues coordinate sn-glycerol 3-phosphate: arginine 94, glutamate 95, and tyrosine 148. Residues arginine 94, glutamate 95, and tyrosine 148 each coordinate glycerol. A beta-D-fructose 1,6-bisphosphate-binding site is contributed by glycine 252. Residue aspartate 265 participates in sn-glycerol 3-phosphate binding. Glycerol-binding residues include aspartate 265 and glutamine 266. Residues threonine 287, glycine 332, glycine 433, and asparagine 437 each contribute to the ADP site. The ATP site is built by threonine 287, glycine 332, and glycine 433. Glutamate 501 is a Zn(2+) binding site. Residues 532-552 (IFCSLPLGFFIVSSVVMLIGA) traverse the membrane as a helical segment.

This sequence belongs to the FGGY kinase family.

Its subcellular location is the mitochondrion outer membrane. It is found in the nucleus. The protein localises to the cytoplasm. The protein resides in the cytosol. The catalysed reaction is glycerol + ATP = sn-glycerol 3-phosphate + ADP + H(+). The protein operates within polyol metabolism; glycerol degradation via glycerol kinase pathway; sn-glycerol 3-phosphate from glycerol: step 1/1. Kinase that plays a key role in glycerol metabolism, catalyzing its phosphorylation to produce sn-glycerol 3-phosphate. Sn-glycerol 3-phosphate is a crucial intermediate in various metabolic pathways, such as the synthesis of glycerolipids and triglycerides, glycogenesis, glycolysis and gluconeogenesis. This is Glycerol kinase from Bos taurus (Bovine).